The chain runs to 743 residues: DNA ligase 2 (743 aa).

Residues 45–49 (DADFD), 94–95 (SL), and E125 each bind NAD(+). K127 acts as the N6-AMP-lysine intermediate in catalysis. NAD(+)-binding residues include R148, E185, K301, and K325. The Zn(2+) site is built by C419, C422, C438, and C444. Positions 639–728 (EGPRPLEGLT…PERAKEAALP (90 aa)) constitute a BRCT domain. A disordered region spans residues 720–743 (ERAKEAALPVPEAAPAADPENSGE). Over residues 725–743 (AALPVPEAAPAADPENSGE) the composition is skewed to low complexity.

Belongs to the NAD-dependent DNA ligase family. LigA subfamily. Mg(2+) is required as a cofactor. It depends on Mn(2+) as a cofactor.

The enzyme catalyses NAD(+) + (deoxyribonucleotide)n-3'-hydroxyl + 5'-phospho-(deoxyribonucleotide)m = (deoxyribonucleotide)n+m + AMP + beta-nicotinamide D-nucleotide.. In terms of biological role, DNA ligase that catalyzes the formation of phosphodiester linkages between 5'-phosphoryl and 3'-hydroxyl groups in double-stranded DNA using NAD as a coenzyme and as the energy source for the reaction. It is essential for DNA replication and repair of damaged DNA. The protein is DNA ligase 2 of Streptomyces griseus subsp. griseus (strain JCM 4626 / CBS 651.72 / NBRC 13350 / KCC S-0626 / ISP 5235).